A 249-amino-acid chain; its full sequence is Coat protein (249 aa).

Residues 1 to 28 (MVDSKKTETPQVVDASKKAENSKTSQAG) are disordered.

The protein belongs to the potexvirus capsid protein family.

The protein localises to the virion. In terms of biological role, required for genome encapsidation. Forms ribonucleoprotein complexes along with TGB1 helicase and viral RNA. This is Coat protein from Solanum tuberosum (Potato).